A 376-amino-acid polypeptide reads, in one-letter code: tRNA-specific 2-thiouridylase MnmA (376 aa).

ATP contacts are provided by residues 16–23 (AMSGGVDS) and Leu-42. Catalysis depends on Cys-111, which acts as the Nucleophile. Cys-111 and Cys-210 form a disulfide bridge. Gly-135 provides a ligand contact to ATP. Residues 158–160 (KDQ) form an interaction with tRNA region. The active-site Cysteine persulfide intermediate is Cys-210.

It belongs to the MnmA/TRMU family.

The protein localises to the cytoplasm. It carries out the reaction S-sulfanyl-L-cysteinyl-[protein] + uridine(34) in tRNA + AH2 + ATP = 2-thiouridine(34) in tRNA + L-cysteinyl-[protein] + A + AMP + diphosphate + H(+). Functionally, catalyzes the 2-thiolation of uridine at the wobble position (U34) of tRNA, leading to the formation of s(2)U34. This is tRNA-specific 2-thiouridylase MnmA from Streptomyces coelicolor (strain ATCC BAA-471 / A3(2) / M145).